An 88-amino-acid polypeptide reads, in one-letter code: Small ribosomal subunit protein bS20 (88 aa).

The disordered stretch occupies residues 1 to 27 (MANSKSAKKRALQSEKRRQHNASRRSM).

It belongs to the bacterial ribosomal protein bS20 family.

Functionally, binds directly to 16S ribosomal RNA. The chain is Small ribosomal subunit protein bS20 from Shewanella oneidensis (strain ATCC 700550 / JCM 31522 / CIP 106686 / LMG 19005 / NCIMB 14063 / MR-1).